We begin with the raw amino-acid sequence, 147 residues long: Hemoglobin subunit gamma (147 aa).

The Globin domain occupies 3 to 147 (HFTAEEKAII…VAIALGHKYH (145 aa)). Histidine 64 and histidine 93 together coordinate heme b.

Belongs to the globin family. In terms of assembly, heterotetramer of two alpha chains and two gamma chains in fetal hemoglobin (Hb F). As to expression, red blood cells.

Its function is as follows. Gamma chains make up the fetal hemoglobin F, in combination with alpha chains. The protein is Hemoglobin subunit gamma (HBG) of Cephalopachus bancanus (Western tarsier).